The sequence spans 128 residues: Early 4 ORF1 protein (128 aa).

Residues M1–S26 are Cytoplasmic-facing. The chain crosses the membrane as a helical span at residues G27–L47. Residues S48–Q99 lie on the Extracellular side of the membrane. The helical transmembrane segment at F100–P120 threads the bilayer. Residues V121–V128 are Cytoplasmic-facing. Residues A125–V128 carry the PBZ domain binding motif motif.

The protein belongs to the adenoviridae E4-ORF1 family. In terms of assembly, may interact with host PDZ proteins through the PDZ domain binding motif (PBM), namely host DLG1, PATJ and TJP2.

It is found in the host membrane. Its function is as follows. May modulate tight-junctions functions of infected cells through interactions with PDZ proteins. E4 ORF1 has ben show for Adenovirus 9 to interact with protein involved in tight junction regulation. May play a role in mTOR activation by activating PI3-kinase, thus overriding cellular checkpoint for translation. The protein is Early 4 ORF1 protein of Human adenovirus C serotype 2 (HAdV-2).